Reading from the N-terminus, the 378-residue chain is uncharacterized protein (378 aa).

Transmembrane regions (helical) follow at residues 12 to 34 (SLAF…STFF), 44 to 66 (VKIY…IFLG), 92 to 112 (SIAL…LMLI), 132 to 154 (GFAS…IFLA), 161 to 180 (EVYA…SIIT), 200 to 222 (TFLL…IAMM), 235 to 257 (VEIY…FWGV), 267 to 285 (VFPL…LFFA), 290 to 312 (LIFV…RVYI), 327 to 349 (FLSL…FLFI), and 356 to 373 (LSAL…FIYL).

It localises to the cell membrane. This is an uncharacterized protein from Aquifex aeolicus (strain VF5).